A 426-amino-acid chain; its full sequence is UPF0229 protein Csal_0882 (426 aa).

A compositionally biased stretch (basic and acidic residues) spans 82 to 93 (FVEGDRLRRPGG). The disordered stretch occupies residues 82–109 (FVEGDRLRRPGGEGRGGSGEGSASNQGE).

This sequence belongs to the UPF0229 family.

This is UPF0229 protein Csal_0882 from Chromohalobacter salexigens (strain ATCC BAA-138 / DSM 3043 / CIP 106854 / NCIMB 13768 / 1H11).